A 162-amino-acid chain; its full sequence is CASP-like protein 1C1 (162 aa).

The Cytoplasmic segment spans residues 1-7 (MAKLHRL). The chain crosses the membrane as a helical span at residues 8 to 28 (ISAVLRLAAAGAAAAAAIIMV). Topologically, residues 29-50 (TSHETTSFFGIEMEAKYSYTPS) are extracellular. The chain crosses the membrane as a helical span at residues 51 to 71 (FVFFVVAFAVAFAYSLLALLA). The Cytoplasmic segment spans residues 72–79 (RPGSTASR). Residues 80 to 100 (LLLLSDVMVGMLLTGAVAATG) form a helical membrane-spanning segment. Residues 101–128 (AISQVGKSGNEHAGWLPICAQVQAYCSH) lie on the Extracellular side of the membrane. The chain crosses the membrane as a helical span at residues 129–149 (VMGALIAGFVSLLLYFLIIMY). The Cytoplasmic portion of the chain corresponds to 150 to 162 (SLHAVAEPLCSCH).

It belongs to the Casparian strip membrane proteins (CASP) family. As to quaternary structure, homodimer and heterodimers.

It localises to the cell membrane. In Sorghum bicolor (Sorghum), this protein is CASP-like protein 1C1.